The sequence spans 100 residues: Putative pterin-4-alpha-carbinolamine dehydratase (100 aa).

The protein belongs to the pterin-4-alpha-carbinolamine dehydratase family.

The catalysed reaction is (4aS,6R)-4a-hydroxy-L-erythro-5,6,7,8-tetrahydrobiopterin = (6R)-L-erythro-6,7-dihydrobiopterin + H2O. This is Putative pterin-4-alpha-carbinolamine dehydratase from Alteromonas mediterranea (strain DSM 17117 / CIP 110805 / LMG 28347 / Deep ecotype).